Consider the following 377-residue polypeptide: Chaperone protein DnaJ (377 aa).

The J domain occupies 5 to 70 (DYYEVLGVGR…NKKAAYDQFG (66 aa)). A CR-type zinc finger spans residues 133-211 (GLTKELRIPT…CHGDGRVEKT (79 aa)). Positions 146, 149, 163, 166, 185, 188, 199, and 202 each coordinate Zn(2+). 4 CXXCXGXG motif repeats span residues 146 to 153 (CDVCDGSG), 163 to 170 (CGTCHGQG), 185 to 192 (CPTCHGRG), and 199 to 206 (CSKCHGDG).

Belongs to the DnaJ family. In terms of assembly, homodimer. Zn(2+) is required as a cofactor.

It localises to the cytoplasm. In terms of biological role, participates actively in the response to hyperosmotic and heat shock by preventing the aggregation of stress-denatured proteins and by disaggregating proteins, also in an autonomous, DnaK-independent fashion. Unfolded proteins bind initially to DnaJ; upon interaction with the DnaJ-bound protein, DnaK hydrolyzes its bound ATP, resulting in the formation of a stable complex. GrpE releases ADP from DnaK; ATP binding to DnaK triggers the release of the substrate protein, thus completing the reaction cycle. Several rounds of ATP-dependent interactions between DnaJ, DnaK and GrpE are required for fully efficient folding. Also involved, together with DnaK and GrpE, in the DNA replication of plasmids through activation of initiation proteins. This is Chaperone protein DnaJ from Shewanella sp. (strain ANA-3).